The following is a 618-amino-acid chain: Protein polyglycylase TTLL10 (618 aa).

The tract at residues 1–76 (MGSSQEEGLP…GLLLGDGKPS (76 aa)) is disordered. The span at 57 to 74 (ATGPPAALLEGLLLGDGK) shows a compositional bias: low complexity. Residues 82–479 (PGPFFYIGGN…TFQKSLRGQK (398 aa)) form the TTL domain. ATP is bound by residues Lys-240, 246-247 (QG), 289-292 (QRYI), 302-304 (KFD), and 345-346 (TN). A protein is bound at residue Gln-246. 3 residues coordinate Mg(2+): Asp-425, Glu-438, and Asn-440. The tract at residues 503 to 618 (LGGSCSLRRR…PATLPAFRDL (116 aa)) is disordered. Residues 539-557 (PVPPPLAPQRPQLPGPSPD) are compositionally biased toward pro residues. The span at 585 to 594 (AKEEREEPEN) shows a compositional bias: basic and acidic residues.

It depends on Mg(2+) as a cofactor.

Its subcellular location is the cytoplasm. The protein resides in the cytoskeleton. It is found in the cell projection. The protein localises to the cilium. It localises to the cilium axoneme. It carries out the reaction (glycyl)(n)-glycyl-L-glutamyl-[protein] + glycine + ATP = (glycyl)(n+1)-glycyl-L-glutamyl-[protein] + ADP + phosphate + H(+). Its function is as follows. Polyglycylase which modifies both tubulin and non-tubulin proteins, generating polyglycine side chains of variable lengths on the gamma-carboxyl groups of specific glutamate residues of target proteins. Involved in the elongation step rather than the initiation step of the polyglycylation reaction. Polyglycylates alpha-tubulin and beta-tubulin. Polyglycylates non-tubulin proteins such as nucleosome assembly protein NAP1. The chain is Protein polyglycylase TTLL10 (TTLL10) from Macaca fascicularis (Crab-eating macaque).